The following is a 306-amino-acid chain: Porphobilinogen deaminase (306 aa).

C239 carries the post-translational modification S-(dipyrrolylmethanemethyl)cysteine.

It belongs to the HMBS family. In terms of assembly, monomer. Dipyrromethane is required as a cofactor.

The enzyme catalyses 4 porphobilinogen + H2O = hydroxymethylbilane + 4 NH4(+). It participates in porphyrin-containing compound metabolism; protoporphyrin-IX biosynthesis; coproporphyrinogen-III from 5-aminolevulinate: step 2/4. Functionally, tetrapolymerization of the monopyrrole PBG into the hydroxymethylbilane pre-uroporphyrinogen in several discrete steps. The polypeptide is Porphobilinogen deaminase (Helicobacter pylori (strain P12)).